A 987-amino-acid chain; its full sequence is Mediator of RNA polymerase II transcription subunit 24 (987 aa).

6 short sequence motifs (LXXLL motif) span residues 128-132 (LHWLL), 344-348 (LTPLL), 446-450 (LDLLL), 555-559 (LVALL), 786-790 (LPGLL), and 855-859 (LMRLL). 2 positions are modified to phosphoserine: S860 and S871.

This sequence belongs to the Mediator complex subunit 24 family. As to quaternary structure, component of the Mediator complex, which is composed of MED1, MED4, MED6, MED7, MED8, MED9, MED10, MED11, MED12, MED13, MED13L, MED14, MED15, MED16, MED17, MED18, MED19, MED20, MED21, MED22, MED23, MED24, MED25, MED26, MED27, MED29, MED30, MED31, CCNC, CDK8 and CDC2L6/CDK11. The MED12, MED13, CCNC and CDK8 subunits form a distinct module termed the CDK8 module. Mediator containing the CDK8 module is less active than Mediator lacking this module in supporting transcriptional activation. Individual preparations of the Mediator complex lacking one or more distinct subunits have been variously termed ARC, CRSP, DRIP, PC2, SMCC and TRAP. Interacts with AR.

The protein resides in the nucleus. Functionally, component of the Mediator complex, a coactivator involved in the regulated transcription of nearly all RNA polymerase II-dependent genes. Mediator functions as a bridge to convey information from gene-specific regulatory proteins to the basal RNA polymerase II transcription machinery. Mediator is recruited to promoters by direct interactions with regulatory proteins and serves as a scaffold for the assembly of a functional preinitiation complex with RNA polymerase II and the general transcription factors. In Rattus norvegicus (Rat), this protein is Mediator of RNA polymerase II transcription subunit 24 (Med24).